A 262-amino-acid polypeptide reads, in one-letter code: Type III pantothenate kinase (262 aa).

6 to 13 (DVGNTNAV) provides a ligand contact to ATP. Substrate is bound by residues tyrosine 100 and 107-110 (GADR). The Proton acceptor role is filled by aspartate 109. Aspartate 129 is a K(+) binding site. Threonine 132 contacts ATP. Threonine 184 contributes to the substrate binding site.

The protein belongs to the type III pantothenate kinase family. In terms of assembly, homodimer. It depends on NH4(+) as a cofactor. K(+) serves as cofactor.

It localises to the cytoplasm. The enzyme catalyses (R)-pantothenate + ATP = (R)-4'-phosphopantothenate + ADP + H(+). Its pathway is cofactor biosynthesis; coenzyme A biosynthesis; CoA from (R)-pantothenate: step 1/5. In terms of biological role, catalyzes the phosphorylation of pantothenate (Pan), the first step in CoA biosynthesis. The chain is Type III pantothenate kinase from Bacillus anthracis (strain A0248).